The following is a 60-amino-acid chain: Metallothionein (60 aa).

Positions 1–28 are beta; sequence MDCACATGGSCSCAGSCKCENCKCTSCK. Positions 3, 5, 11, 13, 17, 19, 22, 24, 27, 31, 32, 34, 35, 39, 42, 46, 48, 56, 58, and 59 each coordinate a divalent metal cation. The alpha stretch occupies residues 29–60; that stretch reads KSCCSCCPSECEKCGQGCVCKGGSSEKCSCCN.

This sequence belongs to the metallothionein superfamily. Type 1 family.

Its function is as follows. Metallothioneins have a high content of cysteine residues that bind various heavy metals. This chain is Metallothionein (MT-A), found in Ambystoma mexicanum (Axolotl).